The chain runs to 127 residues: Large ribosomal subunit protein bL20 (127 aa).

It belongs to the bacterial ribosomal protein bL20 family.

In terms of biological role, binds directly to 23S ribosomal RNA and is necessary for the in vitro assembly process of the 50S ribosomal subunit. It is not involved in the protein synthesizing functions of that subunit. The polypeptide is Large ribosomal subunit protein bL20 (Opitutus terrae (strain DSM 11246 / JCM 15787 / PB90-1)).